Consider the following 376-residue polypeptide: Alpha-centractin (376 aa).

Position 1 is an N-acetylmethionine (methionine 1).

The protein belongs to the actin family. ARP1 subfamily. Part of the ACTR1A/ACTB filament around which the dynactin complex is built. The filament contains 8 copies of ACTR1A and 1 ACTB. Interacts with dynein and adapters such as BICD2. Interacts with BCCIP (isoform 2/alpha).

It localises to the cytoplasm. Its subcellular location is the cytoskeleton. It is found in the microtubule organizing center. The protein resides in the centrosome. The protein localises to the cell cortex. Its function is as follows. Part of the ACTR1A/ACTB filament around which the dynactin complex is built. The dynactin multiprotein complex activates the molecular motor dynein for ultra-processive transport along microtubules. The sequence is that of Alpha-centractin (ACTR1A) from Canis lupus familiaris (Dog).